A 65-amino-acid chain; its full sequence is Hirudin-2' (65 aa).

The tract at residues 1-3 (ITY) is interaction with thrombin active site. Intrachain disulfides connect Cys-6–Cys-14, Cys-16–Cys-28, and Cys-22–Cys-39. The interval 39 to 65 (CVTGEGTPKPQSHNDGDFEEIPEEYLQ) is disordered. Thr-45 carries an O-linked (GalNAc...) threonine glycan. An interaction with fibrinogen-binding exosite of thrombin region spans residues 55–65 (DFEEIPEEYLQ). A compositionally biased stretch (acidic residues) spans 55–65 (DFEEIPEEYLQ). At Tyr-63 the chain carries Sulfotyrosine.

The protein belongs to the protease inhibitor I14 (hirudin) family.

It localises to the secreted. In terms of biological role, hirudin is a potent thrombin-specific protease inhibitor. It forms a stable non-covalent complex with alpha-thrombin, thereby abolishing its ability to cleave fibrinogen. In Hirudo medicinalis (Medicinal leech), this protein is Hirudin-2'.